The sequence spans 273 residues: Putative phosphoenolpyruvate synthase regulatory protein (273 aa).

153–160 (GVSRSGKT) contributes to the ADP binding site.

The protein belongs to the pyruvate, phosphate/water dikinase regulatory protein family. PSRP subfamily.

The enzyme catalyses [pyruvate, water dikinase] + ADP = [pyruvate, water dikinase]-phosphate + AMP + H(+). It catalyses the reaction [pyruvate, water dikinase]-phosphate + phosphate + H(+) = [pyruvate, water dikinase] + diphosphate. In terms of biological role, bifunctional serine/threonine kinase and phosphorylase involved in the regulation of the phosphoenolpyruvate synthase (PEPS) by catalyzing its phosphorylation/dephosphorylation. The sequence is that of Putative phosphoenolpyruvate synthase regulatory protein from Variovorax paradoxus (strain S110).